Reading from the N-terminus, the 826-residue chain is Zinc phosphodiesterase ELAC protein 2 (826 aa).

A mitochondrion-targeting transit peptide spans 1–16 (MWALCSLLRSAAGRTM). Residues 15 to 24 (TMSQGRTISQ) are compositionally biased toward polar residues. 2 disordered regions span residues 15–51 (TMSQ…PSGC) and 189–231 (QRRG…VSQR). Residues 27-38 (ARRERPRKDPLR) are compositionally biased toward basic and acidic residues. Residues Ser-199, Ser-208, Ser-212, Ser-229, Ser-618, and Ser-736 each carry the phosphoserine modification. Positions 208–224 (SPERSSDSESNENEPHL) are enriched in basic and acidic residues. The disordered stretch occupies residues 798 to 826 (ELAGGLEDGEPQQKRAHTEEPQAKKVRAQ). Basic and acidic residues predominate over residues 808–820 (PQQKRAHTEEPQA).

This sequence belongs to the RNase Z family. In terms of assembly, homodimer. Interacts with PTCD1. Requires Zn(2+) as cofactor.

It is found in the mitochondrion. It localises to the mitochondrion matrix. Its subcellular location is the mitochondrion nucleoid. The protein localises to the nucleus. It catalyses the reaction Endonucleolytic cleavage of RNA, removing extra 3' nucleotides from tRNA precursor, generating 3' termini of tRNAs. A 3'-hydroxy group is left at the tRNA terminus and a 5'-phosphoryl group is left at the trailer molecule.. Functionally, zinc phosphodiesterase, which displays mitochondrial tRNA 3'-processing endonuclease activity. Involved in tRNA maturation, by removing a 3'-trailer from precursor tRNA. Associates with mitochondrial DNA complexes at the nucleoids to initiate RNA processing and ribosome assembly. The chain is Zinc phosphodiesterase ELAC protein 2 (ELAC2) from Gorilla gorilla gorilla (Western lowland gorilla).